The primary structure comprises 613 residues: Penicillin-binding protein activator LpoA (613 aa).

Residues 1-29 form the signal peptide; the sequence is MNSMLNFTHKRKSVSRLLAPVALAVILAG. C30 carries N-palmitoyl cysteine lipidation. A lipid anchor (S-diacylglycerol cysteine) is attached at C30.

The protein belongs to the LpoA family. As to quaternary structure, interacts with PBP1a.

Its subcellular location is the cell outer membrane. In terms of biological role, regulator of peptidoglycan synthesis that is essential for the function of penicillin-binding protein 1A (PBP1a). The polypeptide is Penicillin-binding protein activator LpoA (Photobacterium profundum (strain SS9)).